We begin with the raw amino-acid sequence, 812 residues long: MNRKKLAAYGQEFEDDDEEGSSVSKKPTQIHEEIATDEKGKRRFHGAFTGGFSAGYWNTVGSKQGWVPQVFSSSRNERGEQIKQRAEDFMDAEDLGEYGIGNRSIKQTAAFGEGAGQKRKMAWERDTTSISTITQMFEDVVKPVSNSIGVRMLRSMGWREGRGIGLANVKQKQKRGGESSEAQFDREQASKVAPAYEFSNEDALVKQLTPLTGTHGIGYQGLRKTTVLNESYGRTTLALKSGKKNSKGIKGQAFGVGAFEEEDESVYSNYDLSQFDFSLDVAGASEESNLKTQKLVTAFELQPKRLNPRKFYAPPRVPPNFRGDHRPIPMDISKLPQMMKNDVKHMNAEQRAKFLGEDRVNALEIGGKSSKKPTERRSRWDIKANEVEKRDNERGGGEAEEDRDRRQRNRIEFPDEPMRQARFKEFLHYIRRGLPYPQPTDLTVWEWEWEKKEFESKLTSDERGMLPEVQSRAQPLAKTAIAAPIHEMMASKFVKEAGGDLKVGTKDEDKLAAVKMEMFGEKTRQSFDWYPDNLLAKRFNVPHPYPGSDTVGVPALQKTDWKRKDRLADIGGVSATLGLPNTANEIEMRERLLKSRAQRGAEEKKRNQSDDDDEKEYDDKDSDEEEENEAEPNNQKVDKAPKSFFDFIFGDGDGADSDESNSEDEEAEEKERQEILKKREEDLKRRREIVEKKEEENRKRVEKELKELENRDLLRVSKQQEDDDIQIIDETSASSFGPALPPSSKPVLSKTEVLKLLEKNMKKKKKDKKEKEKKKKSKKSKKSKKEKKTKRKHSSSSADDSGDNSDGWEEKK.

Residues 1 to 42 (MNRKKLAAYGQEFEDDDEEGSSVSKKPTQIHEEIATDEKGKR) are disordered. A compositionally biased stretch (basic and acidic residues) spans 29-40 (QIHEEIATDEKG). Positions 145–191 (SNSIGVRMLRSMGWREGRGIGLANVKQKQKRGGESSEAQFDREQASK) constitute a G-patch domain. Disordered regions lie at residues 384–416 (ANEV…FPDE) and 584–812 (NEIE…EEKK). Positions 586–609 (IEMRERLLKSRAQRGAEEKKRNQS) are enriched in basic and acidic residues. Acidic residues-rich tracts occupy residues 610-630 (DDDD…ENEA) and 653-668 (DGAD…EEAE). The span at 669 to 720 (EKERQEILKKREEDLKRRREIVEKKEEENRKRVEKELKELENRDLLRVSKQQ) shows a compositional bias: basic and acidic residues. Basic residues predominate over residues 761–794 (MKKKKKDKKEKEKKKKSKKSKKSKKEKKTKRKHS). Residues 800 to 812 (DSGDNSDGWEEKK) are compositionally biased toward acidic residues.

The protein belongs to the GPATCH1 family.

This chain is G patch domain-containing protein 1 homolog, found in Caenorhabditis elegans.